The following is a 552-amino-acid chain: ATP synthase subunit alpha, mitochondrial (552 aa).

A mitochondrion-targeting transit peptide spans 1–47; it reads MSIFSARLASSVARNLPKAANQVACKAAYPAASLAARKLHVASTQRS. 211–218 contacts ATP; that stretch reads GDRQTGKT.

The protein belongs to the ATPase alpha/beta chains family. F-type ATPases have 2 components, CF(1) - the catalytic core - and CF(0) - the membrane proton channel. CF(1) has five subunits: alpha(3), beta(3), gamma(1), delta(1), epsilon(1). CF(0) has three main subunits: a, b and c.

It localises to the mitochondrion inner membrane. Mitochondrial membrane ATP synthase (F(1)F(0) ATP synthase or Complex V) produces ATP from ADP in the presence of a proton gradient across the membrane which is generated by electron transport complexes of the respiratory chain. F-type ATPases consist of two structural domains, F(1) - containing the extramembraneous catalytic core, and F(0) - containing the membrane proton channel, linked together by a central stalk and a peripheral stalk. During catalysis, ATP synthesis in the catalytic domain of F(1) is coupled via a rotary mechanism of the central stalk subunits to proton translocation. Subunits alpha and beta form the catalytic core in F(1). Rotation of the central stalk against the surrounding alpha(3)beta(3) subunits leads to hydrolysis of ATP in three separate catalytic sites on the beta subunits. Subunit alpha does not bear the catalytic high-affinity ATP-binding sites. The chain is ATP synthase subunit alpha, mitochondrial (blw) from Drosophila melanogaster (Fruit fly).